The following is a 96-amino-acid chain: Cysteine proteinase (96 aa).

Cysteine 25 and cysteine 79 are disulfide-bonded. Active-site residues include histidine 31 and asparagine 58.

This sequence belongs to the peptidase C1 family.

The polypeptide is Cysteine proteinase (Carica papaya (Papaya)).